A 497-amino-acid chain; its full sequence is Replication factor C large subunit (497 aa).

Position 50–57 (50–57 (GPAGVGKT)) interacts with ATP. Positions 428 to 455 (KRRSLGRDEGKAFFEKKPKKQTPDKKQM) are enriched in basic and acidic residues. The interval 428–497 (KRRSLGRDEG…AKPQKTLFDF (70 aa)) is disordered. A compositionally biased stretch (polar residues) spans 456-465 (DLTQIINSTP). Positions 466-476 (QEDKVEKKETE) are enriched in basic and acidic residues.

This sequence belongs to the activator 1 small subunits family. RfcL subfamily. Heteromultimer composed of small subunits (RfcS) and large subunits (RfcL).

In terms of biological role, part of the RFC clamp loader complex which loads the PCNA sliding clamp onto DNA. In Methanococcoides burtonii (strain DSM 6242 / NBRC 107633 / OCM 468 / ACE-M), this protein is Replication factor C large subunit.